The primary structure comprises 217 residues: Probable transaldolase (217 aa).

Lysine 83 acts as the Schiff-base intermediate with substrate in catalysis.

The protein belongs to the transaldolase family. Type 3B subfamily.

It localises to the cytoplasm. It carries out the reaction D-sedoheptulose 7-phosphate + D-glyceraldehyde 3-phosphate = D-erythrose 4-phosphate + beta-D-fructose 6-phosphate. Its pathway is carbohydrate degradation; pentose phosphate pathway; D-glyceraldehyde 3-phosphate and beta-D-fructose 6-phosphate from D-ribose 5-phosphate and D-xylulose 5-phosphate (non-oxidative stage): step 2/3. In terms of biological role, transaldolase is important for the balance of metabolites in the pentose-phosphate pathway. This is Probable transaldolase from Coprothermobacter proteolyticus (strain ATCC 35245 / DSM 5265 / OCM 4 / BT).